The following is a 338-amino-acid chain: Holliday junction branch migration complex subunit RuvB (338 aa).

Positions 4-187 (ADRLIHAEPQ…FGIPLRLEFY (184 aa)) are large ATPase domain (RuvB-L). Residues Arg27, Gly68, Lys71, Thr72, Thr73, 134–136 (EDY), Arg177, Tyr187, and Arg224 contribute to the ATP site. Thr72 lines the Mg(2+) pocket. The tract at residues 188–258 (NVKDLSSIVT…VAELALDMLD (71 aa)) is small ATPAse domain (RuvB-S). Positions 261–338 (SEGFDYMDRK…RHFDIIQPEK (78 aa)) are head domain (RuvB-H). Residues Arg297, Arg316, and Arg321 each coordinate DNA.

This sequence belongs to the RuvB family. Homohexamer. Forms an RuvA(8)-RuvB(12)-Holliday junction (HJ) complex. HJ DNA is sandwiched between 2 RuvA tetramers; dsDNA enters through RuvA and exits via RuvB. An RuvB hexamer assembles on each DNA strand where it exits the tetramer. Each RuvB hexamer is contacted by two RuvA subunits (via domain III) on 2 adjacent RuvB subunits; this complex drives branch migration. In the full resolvosome a probable DNA-RuvA(4)-RuvB(12)-RuvC(2) complex forms which resolves the HJ.

It localises to the cytoplasm. It carries out the reaction ATP + H2O = ADP + phosphate + H(+). The RuvA-RuvB-RuvC complex processes Holliday junction (HJ) DNA during genetic recombination and DNA repair, while the RuvA-RuvB complex plays an important role in the rescue of blocked DNA replication forks via replication fork reversal (RFR). RuvA specifically binds to HJ cruciform DNA, conferring on it an open structure. The RuvB hexamer acts as an ATP-dependent pump, pulling dsDNA into and through the RuvAB complex. RuvB forms 2 homohexamers on either side of HJ DNA bound by 1 or 2 RuvA tetramers; 4 subunits per hexamer contact DNA at a time. Coordinated motions by a converter formed by DNA-disengaged RuvB subunits stimulates ATP hydrolysis and nucleotide exchange. Immobilization of the converter enables RuvB to convert the ATP-contained energy into a lever motion, pulling 2 nucleotides of DNA out of the RuvA tetramer per ATP hydrolyzed, thus driving DNA branch migration. The RuvB motors rotate together with the DNA substrate, which together with the progressing nucleotide cycle form the mechanistic basis for DNA recombination by continuous HJ branch migration. Branch migration allows RuvC to scan DNA until it finds its consensus sequence, where it cleaves and resolves cruciform DNA. This chain is Holliday junction branch migration complex subunit RuvB, found in Shewanella woodyi (strain ATCC 51908 / MS32).